The following is a 404-amino-acid chain: Serine/threonine transporter SstT (404 aa).

The next 8 membrane-spanning stretches (helical) occupy residues 17 to 37 (IGIGVVIGVMLGILAPDLTGF), 39 to 59 (ILGKLFVGGLKAIAPLLVFAL), 75 to 95 (MTLIIFLYLFGTFASALVAVL), 138 to 158 (ALATANYIGVLSWAIIFGLAL), 179 to 199 (IVVWIINLAPIGIMSLVFTTI), 212 to 232 (FLILVLVGTMVFVALVVNPLI), 287 to 307 (IPLGATINMGGAAITINVLTL), and 313 to 333 (FGIPIDFLTALLLSVVAAVSA).

The protein belongs to the dicarboxylate/amino acid:cation symporter (DAACS) (TC 2.A.23) family.

The protein resides in the cell membrane. The catalysed reaction is L-serine(in) + Na(+)(in) = L-serine(out) + Na(+)(out). The enzyme catalyses L-threonine(in) + Na(+)(in) = L-threonine(out) + Na(+)(out). Its function is as follows. Involved in the import of serine and threonine into the cell, with the concomitant import of sodium (symport system). In Streptococcus pyogenes serotype M5 (strain Manfredo), this protein is Serine/threonine transporter SstT.